Consider the following 472-residue polypeptide: Kynureninase 1 (472 aa).

Pyridoxal 5'-phosphate-binding positions include Leu146, Thr147, 174–177, Ser231, Asp260, His263, and Tyr285; that span reads FPSD. An N6-(pyridoxal phosphate)lysine modification is found at Lys286. The pyridoxal 5'-phosphate site is built by Trp326 and Asn354.

It belongs to the kynureninase family. Homodimer. It depends on pyridoxal 5'-phosphate as a cofactor.

Its subcellular location is the cytoplasm. The enzyme catalyses L-kynurenine + H2O = anthranilate + L-alanine + H(+). It catalyses the reaction 3-hydroxy-L-kynurenine + H2O = 3-hydroxyanthranilate + L-alanine + H(+). It functions in the pathway amino-acid degradation; L-kynurenine degradation; L-alanine and anthranilate from L-kynurenine: step 1/1. The protein operates within cofactor biosynthesis; NAD(+) biosynthesis; quinolinate from L-kynurenine: step 2/3. Catalyzes the cleavage of L-kynurenine (L-Kyn) and L-3-hydroxykynurenine (L-3OHKyn) into anthranilic acid (AA) and 3-hydroxyanthranilic acid (3-OHAA), respectively. In Aspergillus niger (strain ATCC MYA-4892 / CBS 513.88 / FGSC A1513), this protein is Kynureninase 1 (bna5-1).